The chain runs to 413 residues: Multifunctional CCA protein (413 aa).

G8 and R11 together coordinate ATP. The CTP site is built by G8 and R11. D21 and D23 together coordinate Mg(2+). ATP is bound by residues R91, R143, and R146. The CTP site is built by R91, R143, and R146. Residues 232-333 (TGVHVMMVVD…VRFFERSDAL (102 aa)) form the HD domain.

The protein belongs to the tRNA nucleotidyltransferase/poly(A) polymerase family. Bacterial CCA-adding enzyme type 1 subfamily. As to quaternary structure, monomer. Can also form homodimers and oligomers. Mg(2+) is required as a cofactor. The cofactor is Ni(2+).

It catalyses the reaction a tRNA precursor + 2 CTP + ATP = a tRNA with a 3' CCA end + 3 diphosphate. The catalysed reaction is a tRNA with a 3' CCA end + 2 CTP + ATP = a tRNA with a 3' CCACCA end + 3 diphosphate. Its function is as follows. Catalyzes the addition and repair of the essential 3'-terminal CCA sequence in tRNAs without using a nucleic acid template. Adds these three nucleotides in the order of C, C, and A to the tRNA nucleotide-73, using CTP and ATP as substrates and producing inorganic pyrophosphate. tRNA 3'-terminal CCA addition is required both for tRNA processing and repair. Also involved in tRNA surveillance by mediating tandem CCA addition to generate a CCACCA at the 3' terminus of unstable tRNAs. While stable tRNAs receive only 3'-terminal CCA, unstable tRNAs are marked with CCACCA and rapidly degraded. This chain is Multifunctional CCA protein, found in Burkholderia ambifaria (strain ATCC BAA-244 / DSM 16087 / CCUG 44356 / LMG 19182 / AMMD) (Burkholderia cepacia (strain AMMD)).